Consider the following 137-residue polypeptide: Protein yippee-like F37A8.5 (137 aa).

The interval Met1–Gln20 is disordered. The 98-residue stretch at Arg32–Asn129 folds into the Yippee domain. Cys36, Cys39, Cys92, and Cys95 together coordinate Zn(2+).

This sequence belongs to the yippee family.

This chain is Protein yippee-like F37A8.5, found in Caenorhabditis elegans.